The primary structure comprises 151 residues: Deoxyuridine 5'-triphosphate nucleotidohydrolase (151 aa).

Substrate is bound by residues 70-72, Asn83, 87-89, and Met97; these read RSG and LID.

The protein belongs to the dUTPase family. Mg(2+) serves as cofactor.

The catalysed reaction is dUTP + H2O = dUMP + diphosphate + H(+). It functions in the pathway pyrimidine metabolism; dUMP biosynthesis; dUMP from dCTP (dUTP route): step 2/2. Its function is as follows. This enzyme is involved in nucleotide metabolism: it produces dUMP, the immediate precursor of thymidine nucleotides and it decreases the intracellular concentration of dUTP so that uracil cannot be incorporated into DNA. In Pseudomonas fluorescens (strain SBW25), this protein is Deoxyuridine 5'-triphosphate nucleotidohydrolase.